The chain runs to 155 residues: Ribonuclease H (155 aa).

One can recognise an RNase H type-1 domain in the interval 4 to 145 (NISKVVIYTD…ADKLAAQGRQ (142 aa)). Aspartate 13, glutamate 51, aspartate 73, and aspartate 137 together coordinate Mg(2+).

It belongs to the RNase H family. In terms of assembly, monomer. The cofactor is Mg(2+).

It localises to the cytoplasm. The catalysed reaction is Endonucleolytic cleavage to 5'-phosphomonoester.. Its function is as follows. Endonuclease that specifically degrades the RNA of RNA-DNA hybrids. The protein is Ribonuclease H of Rickettsia canadensis (strain McKiel).